The primary structure comprises 518 residues: Putative cytochrome P450 CYP13A7 (518 aa).

Cys-464 is a heme binding site.

The protein belongs to the cytochrome P450 family. Heme is required as a cofactor.

Functionally, cytochromes P450 are a group of heme-thiolate monooxygenases. They oxidize a variety of structurally unrelated compounds, including steroids, fatty acids, and xenobiotics. This is Putative cytochrome P450 CYP13A7 (cyp-13A7) from Caenorhabditis elegans.